A 496-amino-acid chain; its full sequence is MAVKNIVAVDLGASSGRVMLATLHTATQHLTLKEIHRFSNTLVFQDNHHQWDLAALERDILTGLHQIDAMGIVPDSIGIDSWGVDYVLLDQDGQRVGLPYSYRDHRTDGVMATVTAELGREAIYQRTGIQFLPFNTLYQLKALCDAPSDDLHQVAHLLMIPDYFHYRLTGSLVCEYTNASTTQLLSLEKKTWDSELLDYLGVPRRWLSDPVQPGHAVGKWAAPSGRQISVTAVATHDTASAVVGAPLQSRDSAYLSSGTWSLMGIESDTPFNSPQALAANITNEGGVDGTYRVLKNIMGLWLLQRVCQERDIKDLGALIEAAAALPAFASLINPNDDRFINPPSMHQAIRDYCREHGQPVPHSDAELARCIFDSLALLYRQVVLELGELRHAPIRQLHIVGGGSQNAFLNQLCADVCQIPVLAGPVEASTLGNIGCQLMALGAVADLAAFRHMLTHNFPLHRYTPRAESDFAGHWRRFQALSQPETAPKGKKETTQ.

13–17 (ASSGR) contacts ATP. Residues Gly83 and 236–238 (HDT) each bind substrate. Asp237 serves as the catalytic Proton acceptor. An ATP-binding site is contributed by Thr259. Asn296 contributes to the substrate binding site. Gln304 serves as a coordination point for ATP. A disulfide bridge connects residues Cys353 and Cys370. Residue Gly402 coordinates ATP. Cys413 and Cys417 are disulfide-bonded.

The protein belongs to the rhamnulokinase family. It depends on Mg(2+) as a cofactor.

The catalysed reaction is L-rhamnulose + ATP = L-rhamnulose 1-phosphate + ADP + H(+). Its pathway is carbohydrate degradation; L-rhamnose degradation; glycerone phosphate from L-rhamnose: step 2/3. Involved in the catabolism of L-rhamnose (6-deoxy-L-mannose). Catalyzes the transfer of the gamma-phosphate group from ATP to the 1-hydroxyl group of L-rhamnulose to yield L-rhamnulose 1-phosphate. The sequence is that of Rhamnulokinase from Pectobacterium carotovorum subsp. carotovorum (strain PC1).